The following is a 260-amino-acid chain: ATP synthase subunit a (260 aa).

7 consecutive transmembrane segments (helical) span residues 29 to 49 (FSFT…LLLI), 95 to 115 (FFPC…QGMI), 124 to 144 (HFLI…IVGF), 151 to 171 (FFSF…LVLL), 191 to 211 (MMAG…MLCM), 213 to 233 (EIFY…LTGL), and 237 to 257 (VAIL…NDAI).

This sequence belongs to the ATPase A chain family. F-type ATPases have 2 components, CF(1) - the catalytic core - and CF(0) - the membrane proton channel. CF(1) has five subunits: alpha(3), beta(3), gamma(1), delta(1), epsilon(1). CF(0) has three main subunits: a, b and c.

The protein resides in the mitochondrion inner membrane. Functionally, mitochondrial membrane ATP synthase (F(1)F(0) ATP synthase or Complex V) produces ATP from ADP in the presence of a proton gradient across the membrane which is generated by electron transport complexes of the respiratory chain. F-type ATPases consist of two structural domains, F(1) - containing the extramembraneous catalytic core and F(0) - containing the membrane proton channel, linked together by a central stalk and a peripheral stalk. During catalysis, ATP synthesis in the catalytic domain of F(1) is coupled via a rotary mechanism of the central stalk subunits to proton translocation. Key component of the proton channel; it may play a direct role in the translocation of protons across the membrane. In Brassica napus (Rape), this protein is ATP synthase subunit a (ATP6).